The following is a 712-amino-acid chain: Probable serine/threonine-protein kinase fhkE (712 aa).

The 55-residue stretch at 46-100 (ITFGRLKDSTVHYNDKSISGSHCKITRESNDDDGVVIAFIYDNSTNGTFIDNIKV) folds into the FHA domain. Residues 145-411 (YFIGEMLGQG…CNNIIQHPWF (267 aa)) form the Protein kinase domain. ATP contacts are provided by residues 151-159 (LGQGNFATV) and Lys-174. Catalysis depends on Asp-270, which acts as the Proton acceptor. Residues 414 to 442 (NVKLSTLLEEDERLRKKAEAEVEANNNNT) adopt a coiled-coil conformation. The interval 431 to 695 (AEAEVEANNN…KCQYDPNCYR (265 aa)) is disordered. Low complexity-rich tracts occupy residues 436–446 (EANNNNTNKSN), 459–481 (GNCS…IKSN), 514–571 (NNDN…SNDT), 595–605 (NLQNHLNNNKI), and 616–639 (NNNN…NNNN). Residues 669 to 678 (PQNSSNNNSG) show a composition bias toward polar residues.

It belongs to the protein kinase superfamily. CAMK Ser/Thr protein kinase family. CHK2 subfamily.

The enzyme catalyses L-seryl-[protein] + ATP = O-phospho-L-seryl-[protein] + ADP + H(+). It catalyses the reaction L-threonyl-[protein] + ATP = O-phospho-L-threonyl-[protein] + ADP + H(+). The chain is Probable serine/threonine-protein kinase fhkE (fhkE) from Dictyostelium discoideum (Social amoeba).